We begin with the raw amino-acid sequence, 314 residues long: Malate dehydrogenase (314 aa).

Residues 11-16 (GSGNIG) and D35 contribute to the NAD(+) site. Residues R84 and R90 each coordinate substrate. NAD(+) contacts are provided by residues N97 and 120–122 (ITN). Residues N122 and R153 each coordinate substrate. H177 (proton acceptor) is an active-site residue.

It belongs to the LDH/MDH superfamily. MDH type 3 family.

The catalysed reaction is (S)-malate + NAD(+) = oxaloacetate + NADH + H(+). Catalyzes the reversible oxidation of malate to oxaloacetate. The protein is Malate dehydrogenase of Rickettsia bellii (strain RML369-C).